The sequence spans 357 residues: UDP-N-acetylglucosamine--N-acetylmuramyl-(pentapeptide) pyrophosphoryl-undecaprenol N-acetylglucosamine transferase (357 aa).

UDP-N-acetyl-alpha-D-glucosamine is bound by residues threonine 15–glycine 17, asparagine 124, arginine 165, serine 194, and glutamine 288.

It belongs to the glycosyltransferase 28 family. MurG subfamily.

The protein localises to the cell inner membrane. It carries out the reaction di-trans,octa-cis-undecaprenyl diphospho-N-acetyl-alpha-D-muramoyl-L-alanyl-D-glutamyl-meso-2,6-diaminopimeloyl-D-alanyl-D-alanine + UDP-N-acetyl-alpha-D-glucosamine = di-trans,octa-cis-undecaprenyl diphospho-[N-acetyl-alpha-D-glucosaminyl-(1-&gt;4)]-N-acetyl-alpha-D-muramoyl-L-alanyl-D-glutamyl-meso-2,6-diaminopimeloyl-D-alanyl-D-alanine + UDP + H(+). Its pathway is cell wall biogenesis; peptidoglycan biosynthesis. Functionally, cell wall formation. Catalyzes the transfer of a GlcNAc subunit on undecaprenyl-pyrophosphoryl-MurNAc-pentapeptide (lipid intermediate I) to form undecaprenyl-pyrophosphoryl-MurNAc-(pentapeptide)GlcNAc (lipid intermediate II). This Nostoc sp. (strain PCC 7120 / SAG 25.82 / UTEX 2576) protein is UDP-N-acetylglucosamine--N-acetylmuramyl-(pentapeptide) pyrophosphoryl-undecaprenol N-acetylglucosamine transferase.